A 434-amino-acid chain; its full sequence is Probable zinc metalloprotease PTRG_04772 (434 aa).

Asn-88 carries an N-linked (GlcNAc...) asparagine glycan. Residues His-111, Asp-131, and Glu-164 each coordinate Zn(2+). Asn-179 carries N-linked (GlcNAc...) asparagine glycosylation. Asp-191 is a Zn(2+) binding site. N-linked (GlcNAc...) asparagine glycans are attached at residues Asn-220, Asn-299, Asn-347, Asn-353, Asn-390, and Asn-395. The Fibronectin type-III domain maps to 340-433 (SPTNVGINTT…LPFPFGCARN (94 aa)).

This sequence belongs to the peptidase M28 family. M28B subfamily. Requires Zn(2+) as cofactor.

It is found in the secreted. This is Probable zinc metalloprotease PTRG_04772 from Pyrenophora tritici-repentis (strain Pt-1C-BFP) (Wheat tan spot fungus).